We begin with the raw amino-acid sequence, 75 residues long: MVTIKELLPYSYWIGHPVSNRAIVYLFVGFTPLTLETLHTLNYIILLNTKRWAPRSPHSDPARMRIPTQPRKAPL.

An important for viral replication in intestinal cells region spans residues 13-18; that stretch reads WIGHPV. At 23–45 the chain is embedded in the membrane; sequence IVYLFVGFTPLTLETLHTLNYII. Positions 53-75 are disordered; that stretch reads APRSPHSDPARMRIPTQPRKAPL.

It is found in the host cytoplasmic vesicle membrane. Facilitates virus release from intestinal cells in vitro, possibly through the host autophagic pathway. This Human enterovirus 71 (strain USA/BrCr/1970) (EV71) protein is ORF2p protein.